Reading from the N-terminus, the 432-residue chain is Monooxygenase penA (432 aa).

A helical transmembrane segment spans residues 7–29 (FKIAIIGAGPAGLTLASLLTASP). A glycan (N-linked (GlcNAc...) asparagine) is linked at Asn33.

Belongs to the aromatic-ring hydroxylase family. Requires FAD as cofactor.

It localises to the membrane. It participates in secondary metabolite biosynthesis. It functions in the pathway alkaloid biosynthesis. Its pathway is mycotoxin biosynthesis. Its function is as follows. Monooxygenase; part of the gene cluster that mediates the biosynthesis of penigequinolones, potent insecticidal alkaloids that contain a highly modified 10-carbon prenyl group. The first stage is catalyzed by the nonribosomal peptide synthetase penN that condenses anthranilic acid and O-methyl-L-tyrosine to produce 4'-methoxycyclopeptin. 4'-methoxycyclopeptin is then converted to 4'-methoxydehydrocyclopeptin by the ketoglutarate-dependent dioxygenase penM through dehydrogenation to form a double bond between C-alpha and C-beta of the O-methyltyrosine side chain. PenM also converts its first product methoxydehydrocyclopeptin to 4'-methoxycyclopenin. The following conversion of 4'methoxycyclopenin into 4'-methoxyviridicatin is catalyzed by the cyclopenase penL. 4'-methoxyviridicatin is the precursor of quinolone natural products, and is further converted to quinolinone B. The prenyltransferase penI then catalyzes the canonical Friedel-Crafts alkylation of quinolinone B with dimethylallyl cation to yield dimethylallyl quinolone, which is subjected to FAD-dependent dehydrogenation by the FAD-linked oxidoreductase penH to yield conjugated aryl diene. The delta(3') double bond then serves as the site of the second alkylation with DMAPP catalyzed by the prenyltransferase penG to yield a carbenium ion intermediate, which can be attacked by H(2)O to yield a styrenyl quinolone containing a C3'-hydroxyprenyl chain, or undergo cyclization to yield yaequinolones J1 and J2. The conversion of the styrenyl quinolone into the tetrahydrofuran-containing yaequinolone C is performed by the FAD-dependent monooxygenase penE and involves epoxidation of the terminal C7'-C8' olefin, followed by epoxide ring opening initiated by the C3' hydroxyl group. The predicted cysteine hydrolase penJ acts as an epoxide hydrolase that enhances the rate of the 5-exo-tet cyclization step, increasing the yield of yaequinolone C. PenF catalyzes the cationic rearrangement of the epoxide formed by penE (before ring opening to produce yaequinolone C) into yaequinolone D. Finally, the short-chain dehydrogenase/reductase (SDR)-like reductase penD, catalyzes both the dehydration of yaequinolone D and the reduction of the resulting oxonium to yield penigequinolone. The protein is Monooxygenase penA of Penicillium thymicola.